We begin with the raw amino-acid sequence, 1017 residues long: Protein HIRA (1017 aa).

2 WD repeats span residues 11 to 53 and 68 to 107; these read HNGK…QEDD and NHLA…GPST. Phosphoserine is present on S111. WD repeat units follow at residues 129–168, 172–211, 220–263, 266–322, and 326–367; these read NHSG…EILA, GHSG…LETS, GGTT…TNMD, GHRK…PLVV, and LFDK…DPLS. Residues 421-479 are interaction with ASF1A; that stretch reads REMGSATSVAGVVNGESLEDIRKNLLKKQVETRTADGRRRITPLCIAQLDTGDFSTAFF. Positions 421–729 are interaction with CCNA1; that stretch reads REMGSATSVA…RLKCNREGKE (309 aa). Positions 439 to 475 are required for repression of histone gene transcription; it reads EDIRKNLLKKQVETRTADGRRRITPLCIAQLDTGDFS. Residues 494–509 show a composition bias toward low complexity; the sequence is SSHSSPQLLPLDSSTP. Residues 494-555 are disordered; it reads SSHSSPQLLP…AALSPSVLTT (62 aa). Residues 536-555 show a composition bias toward polar residues; sequence KDSMNATSTPAALSPSVLTT. Position 549 is a phosphoserine (S549). T555 carries the post-translational modification Phosphothreonine; by CDK2. S557 carries the post-translational modification Phosphoserine. Disordered stretches follow at residues 570-589 and 604-625; these read TERS…TPTA and PRDL…KASS. A Phosphothreonine modification is found at T576. A Phosphoserine modification is found at S584. Phosphothreonine is present on T586. Residues 593–826 are interaction with histone H2B; sequence LKEQNLVKEL…LAGSDMTVSQ (234 aa). Interaction with PAX3 regions lie at residues 594–739 and 740–828; these read KEQN…SRIL and TAAG…SQIL. The segment covering 604–619 has biased composition (basic and acidic residues); it reads PRDLLESSSDSDEKVP. A phosphoserine mark is found at S610, S611, S612, S614, S661, S675, and S687. The interval 738–1017 is interaction with histone H4; it reads ILTAAGSCDV…QEQLDILRDK (280 aa).

This sequence belongs to the WD repeat HIR1 family. Interacts with histone H3-3B, PAX3 and PAX7. Interacts with histone H3.Y. Interacts with CCNA1, HIRIP3, NFU1/HIRIP5 and histone H2B. Part of a complex which includes ASF1A, CABIN1, histone H3.3, histone H4 and UBN1. In terms of processing, sumoylated. Post-translationally, phosphorylated by CDK2/CCNA1 and CDK2/CCNE1 on Thr-555 in vitro. Also phosphorylated on Thr-555 and Ser-687 in vivo. As to expression, expressed at high levels in kidney, pancreas and skeletal muscle and at lower levels in brain, heart, liver, lung, and placenta.

Its subcellular location is the nucleus. The protein resides in the PML body. Its function is as follows. Cooperates with ASF1A to promote replication-independent chromatin assembly. Required for the periodic repression of histone gene transcription during the cell cycle. Required for the formation of senescence-associated heterochromatin foci (SAHF) and efficient senescence-associated cell cycle exit. This is Protein HIRA (HIRA) from Homo sapiens (Human).